A 303-amino-acid chain; its full sequence is Tyrosine-protein phosphatase 3 (303 aa).

In terms of domain architecture, Tyrosine-protein phosphatase spans 24-292; sequence YMIIEGLNEE…VFLYTVSQEL (269 aa). The Phosphocysteine intermediate role is filled by Cys227.

It belongs to the protein-tyrosine phosphatase family. Non-receptor class subfamily.

Its subcellular location is the cytoplasm. The enzyme catalyses O-phospho-L-tyrosyl-[protein] + H2O = L-tyrosyl-[protein] + phosphate. Contributes to dephosphorylation of tyrosine 15 of cdc2. This chain is Tyrosine-protein phosphatase 3 (pyp3), found in Schizosaccharomyces pombe (strain 972 / ATCC 24843) (Fission yeast).